A 446-amino-acid chain; its full sequence is MAENLDISELSPIHPAIISRQATINIGTIGHVAHGKSTVVKAISGVHTVRFKNELERNITIKLGYANAKIYKCSNEECPRPGCYRSYSSNKEDHPPCEICNSPMNLVRHVSFVDCPGHDILMATMLNGAAVMDAALLLIAGNESCPQPQTSEHLAAIEIMQLKHIIILQNKVDLIRESAAEEHYQSILKFIKGTVAENSPIVPISAQLKYNIDAILEYIVKKIPIPVRDFTTAPRLIVIRSFDVNKPGAEVDDLKGGVAGGSILTGVLRLNDEIEIRPGIVTKDDDGRIRCQPIFSRIISLFAEHNDLKIAVPGGLIGVGTTVDPTLCRADRLVGQVLGSKGNLPEVYTELEINYFLLRRLLGVKSGDKNTTKVQKLAKNEVLMVNIGSTSTGGRVMMVKADMAKILLTAPACTEIGEKVALSRRIEKHWRLIGWAKVVEGKTLKV.

The tr-type G domain maps to 21–227 (QATINIGTIG…YIVKKIPIPV (207 aa)). A G1 region spans residues 30-37 (GHVAHGKS). Residue 33–38 (AHGKST) participates in GTP binding. Residues 58–62 (NITIK) form a G2 region. The segment at 114–117 (DCPG) is G3. GTP is bound by residues 170-173 (NKVD) and 205-207 (SAQ). The interval 170 to 173 (NKVD) is G4. A G5 region spans residues 205–207 (SAQ). Residues 436 to 446 (AKVVEGKTLKV) are interacts with cdc123.

Belongs to the TRAFAC class translation factor GTPase superfamily. Classic translation factor GTPase family. EIF2G subfamily. In terms of assembly, eukaryotic translation initiation factor 2 eIF2 is a heterotrimeric complex composed of an alpha, a beta and a gamma subunit. The factors eIF-1, eIF-2, eIF-3, TIF5/eIF-5 and methionyl-tRNAi form a multifactor complex (MFC) that may bind to the 40S ribosome. Interacts with cdc123; the interaction is direct.

The protein localises to the cytoplasm. It is found in the cytosol. The enzyme catalyses GTP + H2O = GDP + phosphate + H(+). In terms of biological role, as a subunit of eukaryotic initiation factor 2 eIF2, involved in the early steps of protein synthesis. In the presence of GTP, eIF-2 forms a ternary complex with initiator tRNA Met-tRNAi and then recruits the 40S ribosomal complex and initiation factors eIF-1, eIF-1A and eIF-3 to form the 43S pre-initiation complex (43S PIC), a step that determines the rate of protein translation. The 43S PIC binds to mRNA and scans downstream to the initiation codon, where it forms a 48S initiation complex by codon-anticodon base pairing. This leads to the displacement of eIF-1 to allow GTPase-activating protein (GAP) eIF-5-mediated hydrolysis of eIF2-bound GTP. Hydrolysis of GTP and release of Pi, which makes GTP hydrolysis irreversible, causes the release of the eIF-2-GDP binary complex from the 40S subunit, an event that is essential for the subsequent joining of the 60S ribosomal subunit to form an elongation-competent 80S ribosome. In order for eIF-2 to recycle and catalyze another round of initiation, the GDP bound to eIF-2 must be exchanged with GTP by way of a reaction catalyzed by GDP-GTP exchange factor (GEF) eIF-2B. The sequence is that of Eukaryotic translation initiation factor 2 subunit gamma (tif213) from Schizosaccharomyces pombe (strain 972 / ATCC 24843) (Fission yeast).